A 463-amino-acid chain; its full sequence is Dopaminechrome tautomerase (463 aa).

It belongs to the major royal jelly protein family.

It is found in the secreted. The enzyme catalyses dopaminechrome = 5,6-dihydroxyindole. It participates in pigment biosynthesis; melanin biosynthesis. Functionally, catalyzes the conversion of dopaminechrome to 5,6-dihydroxyindole in the eumelanin biosynthetic pathway originating from dopamine. Catalyzes tautomerization of dopaminechrome to 5,6-dihydroxyindole during eumelanin biosynthesis. Acts both dopaminechrome and N-methyl dopaminechrome but not on dopachrome or other aminochromes tested. This is Dopaminechrome tautomerase from Drosophila melanogaster (Fruit fly).